We begin with the raw amino-acid sequence, 355 residues long: Vacuolar protein sorting-associated protein 37C (355 aa).

A Phosphoserine modification is found at Ser-29. The VPS37 C-terminal domain occupies 78–167; sequence VERCQEQKAK…RKPRASQELA (90 aa). The segment at 159 to 355 is disordered; sequence KPRASQELAG…PPPGPAWPGY (197 aa). Composition is skewed to pro residues over residues 170-186 and 194-214; these read APPP…PQGT and PQPP…PSLP. The segment covering 291–304 has biased composition (low complexity); it reads APSPGYPQQSPYPA. Positions 321 to 355 are enriched in pro residues; the sequence is PGQPQPSVPLQPPYPPGPAPPYGFPPPPGPAWPGY.

The protein belongs to the VPS37 family. As to quaternary structure, component of the ESCRT-I complex (endosomal sorting complex required for transport I) which consists of TSG101, VPS28, a VPS37 protein (VPS37A to -D) and MVB12A or MVB12B in a 1:1:1:1 stoichiometry. Interacts with TSG101, VPS28, MVB12A and MVB12B. Component of the ESCRT-I complex (endosomal sorting complex required for transport I) which consists of TSG101, VPS28, a VPS37 protein (VPS37A to -D) and UBAP1 in a 1:1:1:1 stoichiometry. Interacts with HGS and STAM2. Interacts with CEP55. In terms of processing, phosphorylated by TBK1.

The protein resides in the late endosome membrane. Component of the ESCRT-I complex, a regulator of vesicular trafficking process. Required for the sorting of endocytic ubiquitinated cargos into multivesicular bodies. May be involved in cell growth and differentiation. This Homo sapiens (Human) protein is Vacuolar protein sorting-associated protein 37C (VPS37C).